The primary structure comprises 350 residues: UDP-3-O-acylglucosamine N-acyltransferase (350 aa).

His244 functions as the Proton acceptor in the catalytic mechanism.

This sequence belongs to the transferase hexapeptide repeat family. LpxD subfamily. Homotrimer.

It carries out the reaction a UDP-3-O-[(3R)-3-hydroxyacyl]-alpha-D-glucosamine + a (3R)-hydroxyacyl-[ACP] = a UDP-2-N,3-O-bis[(3R)-3-hydroxyacyl]-alpha-D-glucosamine + holo-[ACP] + H(+). It functions in the pathway bacterial outer membrane biogenesis; LPS lipid A biosynthesis. Its function is as follows. Catalyzes the N-acylation of UDP-3-O-acylglucosamine using 3-hydroxyacyl-ACP as the acyl donor. Is involved in the biosynthesis of lipid A, a phosphorylated glycolipid that anchors the lipopolysaccharide to the outer membrane of the cell. In Herminiimonas arsenicoxydans, this protein is UDP-3-O-acylglucosamine N-acyltransferase.